Consider the following 425-residue polypeptide: Histidinol dehydrogenase (425 aa).

Positions 231, 253, and 256 each coordinate substrate. 2 residues coordinate Zn(2+): Q253 and H256. Catalysis depends on proton acceptor residues E321 and H322. H322, D355, E409, and H414 together coordinate substrate. D355 contacts Zn(2+). H414 provides a ligand contact to Zn(2+).

This sequence belongs to the histidinol dehydrogenase family. Requires Zn(2+) as cofactor.

The catalysed reaction is L-histidinol + 2 NAD(+) + H2O = L-histidine + 2 NADH + 3 H(+). The protein operates within amino-acid biosynthesis; L-histidine biosynthesis; L-histidine from 5-phospho-alpha-D-ribose 1-diphosphate: step 9/9. In terms of biological role, catalyzes the sequential NAD-dependent oxidations of L-histidinol to L-histidinaldehyde and then to L-histidine. In Carboxydothermus hydrogenoformans (strain ATCC BAA-161 / DSM 6008 / Z-2901), this protein is Histidinol dehydrogenase.